The chain runs to 366 residues: Succinyl-diaminopimelate desuccinylase (366 aa).

His66 contacts Zn(2+). Residue Asp68 is part of the active site. Asp97 is a binding site for Zn(2+). Glu127 serves as the catalytic Proton acceptor. Residues Glu128, Glu156, and His341 each coordinate Zn(2+).

The protein belongs to the peptidase M20A family. DapE subfamily. In terms of assembly, homodimer. Zn(2+) is required as a cofactor. Requires Co(2+) as cofactor.

It carries out the reaction N-succinyl-(2S,6S)-2,6-diaminopimelate + H2O = (2S,6S)-2,6-diaminopimelate + succinate. Its pathway is amino-acid biosynthesis; L-lysine biosynthesis via DAP pathway; LL-2,6-diaminopimelate from (S)-tetrahydrodipicolinate (succinylase route): step 3/3. Functionally, catalyzes the hydrolysis of N-succinyl-L,L-diaminopimelic acid (SDAP), forming succinate and LL-2,6-diaminopimelate (DAP), an intermediate involved in the bacterial biosynthesis of lysine and meso-diaminopimelic acid, an essential component of bacterial cell walls. The polypeptide is Succinyl-diaminopimelate desuccinylase (Aliarcobacter butzleri (strain RM4018) (Arcobacter butzleri)).